The primary structure comprises 206 residues: Large ribosomal subunit protein uL4 (206 aa).

Belongs to the universal ribosomal protein uL4 family. As to quaternary structure, part of the 50S ribosomal subunit.

In terms of biological role, one of the primary rRNA binding proteins, this protein initially binds near the 5'-end of the 23S rRNA. It is important during the early stages of 50S assembly. It makes multiple contacts with different domains of the 23S rRNA in the assembled 50S subunit and ribosome. Its function is as follows. Forms part of the polypeptide exit tunnel. The protein is Large ribosomal subunit protein uL4 of Nitratidesulfovibrio vulgaris (strain ATCC 29579 / DSM 644 / CCUG 34227 / NCIMB 8303 / VKM B-1760 / Hildenborough) (Desulfovibrio vulgaris).